A 246-amino-acid polypeptide reads, in one-letter code: Eukaryotic translation initiation factor 6 (246 aa).

Belongs to the eIF-6 family. Monomer. Associates with the 60S ribosomal subunit.

The protein localises to the cytoplasm. It is found in the nucleus. Its subcellular location is the nucleolus. Functionally, binds to the 60S ribosomal subunit and prevents its association with the 40S ribosomal subunit to form the 80S initiation complex in the cytoplasm. May also be involved in ribosome biogenesis. Involved in miRNA-mediated gene silencing. The protein is Eukaryotic translation initiation factor 6 of Caenorhabditis elegans.